The primary structure comprises 275 residues: 3-methyl-2-oxobutanoate hydroxymethyltransferase (275 aa).

Residues aspartate 44 and aspartate 83 each coordinate Mg(2+). Residues 44–45, aspartate 83, and lysine 113 each bind 3-methyl-2-oxobutanoate; that span reads DS. Residue glutamate 115 coordinates Mg(2+). Glutamate 182 serves as the catalytic Proton acceptor.

It belongs to the PanB family. As to quaternary structure, homodecamer; pentamer of dimers. It depends on Mg(2+) as a cofactor.

It is found in the cytoplasm. It carries out the reaction 3-methyl-2-oxobutanoate + (6R)-5,10-methylene-5,6,7,8-tetrahydrofolate + H2O = 2-dehydropantoate + (6S)-5,6,7,8-tetrahydrofolate. It functions in the pathway cofactor biosynthesis; (R)-pantothenate biosynthesis; (R)-pantoate from 3-methyl-2-oxobutanoate: step 1/2. Catalyzes the reversible reaction in which hydroxymethyl group from 5,10-methylenetetrahydrofolate is transferred onto alpha-ketoisovalerate to form ketopantoate. The protein is 3-methyl-2-oxobutanoate hydroxymethyltransferase of Clostridioides difficile (strain 630) (Peptoclostridium difficile).